Reading from the N-terminus, the 90-residue chain is Protein E7 (90 aa).

The tract at residues 1-41 is E7 terminal domain; sequence MHGPKPTVKDIELDLAPEAVPLVCNEQLDSSDEEDCIDVVE. The LXCXE motif; interaction with host RB1 and TMEM173/STING signature appears at 22–26; the sequence is LVCNE. The segment at 53–89 is a zinc-finger region; that stretch reads CTKCSTTLRLVVESSEADIRAFQELLLRTLKIVCPRC. A Nuclear export signal motif is present at residues 71–79; the sequence is IRAFQELLL.

The protein belongs to the papillomaviridae E7 protein family. In terms of assembly, homodimer. Homooligomer. Interacts with host RB1; this interaction induces dissociation of RB1-E2F1 complex thereby disrupting RB1 activity. Interacts with host EP300; this interaction represses EP300 transcriptional activity. Interacts with protein E2; this interaction inhibits E7 oncogenic activity. Interacts with host TMEM173/STING; this interaction impairs the ability of TMEM173/STING to sense cytosolic DNA and promote the production of type I interferon (IFN-alpha and IFN-beta). In terms of processing, highly phosphorylated.

The protein localises to the host cytoplasm. Its subcellular location is the host nucleus. Plays a role in viral genome replication by driving entry of quiescent cells into the cell cycle. Stimulation of progression from G1 to S phase allows the virus to efficiently use the cellular DNA replicating machinery to achieve viral genome replication. E7 protein has both transforming and trans-activating activities. Induces the disassembly of the E2F1 transcription factor from RB1, with subsequent transcriptional activation of E2F1-regulated S-phase genes. Interferes with host histone deacetylation mediated by HDAC1 and HDAC2, leading to transcription activation. Also plays a role in the inhibition of both antiviral and antiproliferative functions of host interferon alpha. Interaction with host TMEM173/STING impairs the ability of TMEM173/STING to sense cytosolic DNA and promote the production of type I interferon (IFN-alpha and IFN-beta). This chain is Protein E7, found in Homo sapiens (Human).